Here is a 285-residue protein sequence, read N- to C-terminus: Glutamate racemase (285 aa).

Substrate-binding positions include 30-31 (DS) and 62-63 (YG). Residue C94 is the Proton donor/acceptor of the active site. A substrate-binding site is contributed by 95-96 (NT). The Proton donor/acceptor role is filled by C206. 207 to 208 (TH) contributes to the substrate binding site.

Belongs to the aspartate/glutamate racemases family.

It carries out the reaction L-glutamate = D-glutamate. Its pathway is cell wall biogenesis; peptidoglycan biosynthesis. Functionally, provides the (R)-glutamate required for cell wall biosynthesis. This chain is Glutamate racemase, found in Pectobacterium carotovorum subsp. carotovorum (strain PC1).